The primary structure comprises 475 residues: ATP synthase subunit beta (475 aa).

152–159 (GGAGVGKT) is a binding site for ATP.

The protein belongs to the ATPase alpha/beta chains family. F-type ATPases have 2 components, CF(1) - the catalytic core - and CF(0) - the membrane proton channel. CF(1) has five subunits: alpha(3), beta(3), gamma(1), delta(1), epsilon(1). CF(0) has four main subunits: a(1), b(1), b'(1) and c(9-12).

It localises to the cell inner membrane. The catalysed reaction is ATP + H2O + 4 H(+)(in) = ADP + phosphate + 5 H(+)(out). Functionally, produces ATP from ADP in the presence of a proton gradient across the membrane. The catalytic sites are hosted primarily by the beta subunits. This is ATP synthase subunit beta from Cereibacter sphaeroides (strain ATCC 17025 / ATH 2.4.3) (Rhodobacter sphaeroides).